Consider the following 434-residue polypeptide: Glutamyl-tRNA reductase (434 aa).

Substrate-binding positions include threonine 49–arginine 52, serine 114, glutamate 119–glutamine 121, and glutamine 125. Cysteine 50 functions as the Nucleophile in the catalytic mechanism. Glycine 199–isoleucine 204 lines the NADP(+) pocket.

It belongs to the glutamyl-tRNA reductase family. As to quaternary structure, homodimer.

It catalyses the reaction (S)-4-amino-5-oxopentanoate + tRNA(Glu) + NADP(+) = L-glutamyl-tRNA(Glu) + NADPH + H(+). Its pathway is porphyrin-containing compound metabolism; protoporphyrin-IX biosynthesis; 5-aminolevulinate from L-glutamyl-tRNA(Glu): step 1/2. Its function is as follows. Catalyzes the NADPH-dependent reduction of glutamyl-tRNA(Glu) to glutamate 1-semialdehyde (GSA). The polypeptide is Glutamyl-tRNA reductase (Pasteurella multocida (strain Pm70)).